A 157-amino-acid polypeptide reads, in one-letter code: Cytochrome b6-f complex subunit 4 (157 aa).

3 consecutive transmembrane segments (helical) span residues 35-55 (ILYI…GLGV), 94-114 (LVGV…AFIE), and 130-150 (LVYL…VLGI).

The protein belongs to the cytochrome b family. PetD subfamily. The 4 large subunits of the cytochrome b6-f complex are cytochrome b6, subunit IV (17 kDa polypeptide, petD), cytochrome f and the Rieske protein, while the 4 small subunits are petG, petL, petM and petN. The complex functions as a dimer.

The protein localises to the plastid. Its subcellular location is the chloroplast thylakoid membrane. In terms of biological role, component of the cytochrome b6-f complex, which mediates electron transfer between photosystem II (PSII) and photosystem I (PSI), cyclic electron flow around PSI, and state transitions. The protein is Cytochrome b6-f complex subunit 4 of Amphidinium carterae (Dinoflagellate).